The chain runs to 134 residues: DNA-directed RNA polymerase subunit omega (134 aa).

A disordered region spans residues Glu76–Asp102.

Belongs to the RNA polymerase subunit omega family. The RNAP catalytic core consists of 2 alpha, 1 beta, 1 beta' and 1 omega subunit. When a sigma factor is associated with the core the holoenzyme is formed, which can initiate transcription.

It catalyses the reaction RNA(n) + a ribonucleoside 5'-triphosphate = RNA(n+1) + diphosphate. In terms of biological role, promotes RNA polymerase assembly. Latches the N- and C-terminal regions of the beta' subunit thereby facilitating its interaction with the beta and alpha subunits. The chain is DNA-directed RNA polymerase subunit omega from Rhizobium etli (strain ATCC 51251 / DSM 11541 / JCM 21823 / NBRC 15573 / CFN 42).